Reading from the N-terminus, the 715-residue chain is Methylcrotonoyl-CoA carboxylase subunit alpha, mitochondrial (715 aa).

The N-terminal 38 residues, 1–38 (MAAAALLAAVDRNQLRRVPILLLQPREWPWKHRTVKYG), are a transit peptide targeting the mitochondrion. One can recognise a Biotin carboxylation domain in the interval 45–490 (ITKVLIANRG…HTDFIPQHHK (446 aa)). Lys-159 contributes to the ATP binding site. Positions 163–360 (KSIMAAAGVP…LVEWQLRIAA (198 aa)) constitute an ATP-grasp domain. Lys-193 is modified (N6-acetyllysine). ATP is bound by residues Lys-201 and 207–208 (GG). Lys-233 is modified (N6-acetyllysine). Positions 251, 278, and 318 each coordinate ATP. The active site involves Arg-335. Lys-490 carries the N6-acetyllysine modification. The residue at position 577 (Lys-577) is an N6-acetyllysine; alternate. Residue Lys-577 is modified to N6-succinyllysine; alternate. Residues 622–711 (SIEVGIPVPK…NRHAPLVEFE (90 aa)) form the Biotinyl-binding domain. Lys-677 carries the N6-biotinyllysine modification.

As to quaternary structure, probably a dodecamer composed of six biotin-containing alpha subunits (MCCC1) and six beta (MCCC2) subunits. Interacts (via the biotin carboxylation domain) with SIRT4. Biotin is required as a cofactor. Acetylated.

The protein resides in the mitochondrion matrix. It carries out the reaction 3-methylbut-2-enoyl-CoA + hydrogencarbonate + ATP = 3-methyl-(2E)-glutaconyl-CoA + ADP + phosphate + H(+). It participates in amino-acid degradation; L-leucine degradation; (S)-3-hydroxy-3-methylglutaryl-CoA from 3-isovaleryl-CoA: step 2/3. Biotin-attachment subunit of the 3-methylcrotonyl-CoA carboxylase, an enzyme that catalyzes the conversion of 3-methylcrotonyl-CoA to 3-methylglutaconyl-CoA, a critical step for leucine and isovaleric acid catabolism. The chain is Methylcrotonoyl-CoA carboxylase subunit alpha, mitochondrial from Rattus norvegicus (Rat).